Here is a 514-residue protein sequence, read N- to C-terminus: Retron Vc95 probable ATPase (514 aa).

An ATP-binding motif is present at residues 92-99 (GNNGSGKS).

In terms of biological role, probable ATPase component of antiviral defense system retron Vc95, composed of a non-coding RNA (ncRNA), a reverse transcriptase (RT), this protein and a putative HNH endonuclease. Expression of retron Vc95 confers protection against bacteriophages T2, T4 and T6. At multiplicity of infection (MOI) of 0.02 cultures slow growth when infected with T4 but do not collapse, at MOI 2 cultures enter growth stasis. This Vibrio cholerae serotype O1 biovar El Tor protein is Retron Vc95 probable ATPase.